An 886-amino-acid chain; its full sequence is Desmocollin-1 (886 aa).

The signal sequence occupies residues 1–29; that stretch reads MAVACAAPGSTFSKQLLFFLLVLVLFCDA. The propeptide occupies 30–134; that stretch reads CQKVSLHVPS…KEPVHNRSKR (105 aa). 2 N-linked (GlcNAc...) asparagine glycosylation sites follow: Asn-130 and Asn-165. 5 consecutive Cadherin domains span residues 135-242, 243-354, 355-471, 472-575, and 576-682; these read RWAP…APYF, ETKL…SPYF, TQTS…GPEC, QPPV…DHPP, and QIDK…EERD. The Extracellular portion of the chain corresponds to 135 to 691; the sequence is RWAPIPCSLM…DAKPNIILGK (557 aa). Phosphothreonine is present on Thr-385. N-linked (GlcNAc...) (high mannose) asparagine glycosylation occurs at Asn-546. A glycan (N-linked (GlcNAc...) asparagine) is linked at Asn-613. A helical transmembrane segment spans residues 692–714; that stretch reads WAILAMVLGSALLLCILFTCFCV. At 715–886 the chain is on the cytoplasmic side; it reads TTTKRTVKKC…RTLAKTCVKK (172 aa).

Binds to JUP/plakoglobin. Expressed in the epidermis and inner root sheaths of hair follicles (at protein level).

Its subcellular location is the cell membrane. The protein localises to the cell junction. It is found in the desmosome. Its function is as follows. A component of desmosome cell-cell junctions which are required for positive regulation of cellular adhesion. Required for desmosome adhesion strength between the granular layers of the epidermis, as a result moderates epidermal proliferation and differentiation. Is therefore required to maintain postnatal epidermal barrier function and normal hair follicle morphology into adulthood. This chain is Desmocollin-1 (Dsc1), found in Mus musculus (Mouse).